We begin with the raw amino-acid sequence, 302 residues long: MTKLIVICGATATGKSSLALALAMRLGSVIISADSRQVYRKFDIGTAKPTVAEQKLVPHYLIDICDPTDTMTVADYQEQTQALIASVDVTPLLLVGGTGLYIRSIVQGMKIPRVAPQIELRSQLESLGQLQLYAMLQQVDPVAAQKIHANDSVRTLRALEVYYVTGCPISEQQGENPPNYPILQIGLDCDVEKLGNRIKQRTEQMIADGLVAEVEYLCQKYGADLSLLNTLGYQEIKQYLAGDISLDEAKELTILHTRQFAKRQRTWFRAYPQIEWFDANNPDLLDKIWLRINEFTNCTHSS.

Residue 9 to 16 (GATATGKS) participates in ATP binding. 11–16 (TATGKS) lines the substrate pocket. The segment at 34–37 (DSRQ) is interaction with substrate tRNA.

This sequence belongs to the IPP transferase family. Monomer. Mg(2+) serves as cofactor.

The catalysed reaction is adenosine(37) in tRNA + dimethylallyl diphosphate = N(6)-dimethylallyladenosine(37) in tRNA + diphosphate. Functionally, catalyzes the transfer of a dimethylallyl group onto the adenine at position 37 in tRNAs that read codons beginning with uridine, leading to the formation of N6-(dimethylallyl)adenosine (i(6)A). The sequence is that of tRNA dimethylallyltransferase from Nostoc punctiforme (strain ATCC 29133 / PCC 73102).